The primary structure comprises 278 residues: Rhomboid protease GlpG (278 aa).

A run of 6 helical transmembrane segments spans residues 95–115 (GPLT…MQIV), 143–163 (AFLH…WYLA), 170–190 (LGTG…GWGQ), 192–212 (LFSG…MGYV), 224–241 (ISLP…LVAG), and 245–267 (ILGL…LMAF). S202 acts as the Nucleophile in catalysis. H255 is a catalytic residue.

This sequence belongs to the peptidase S54 family.

It is found in the cell inner membrane. It carries out the reaction Cleaves type-1 transmembrane domains using a catalytic dyad composed of serine and histidine that are contributed by different transmembrane domains.. Functionally, rhomboid-type serine protease that catalyzes intramembrane proteolysis. The protein is Rhomboid protease GlpG of Yersinia enterocolitica serotype O:8 / biotype 1B (strain NCTC 13174 / 8081).